Reading from the N-terminus, the 113-residue chain is Putative anti-sigma factor antagonist TM_1081 (113 aa).

Residues 1–110 enclose the STAS domain; it reads MFPYKIVDDV…DTISEAMEEV (110 aa). Serine 55 is subject to Phosphoserine.

This sequence belongs to the anti-sigma-factor antagonist family. Phosphorylated on a serine residue.

Its function is as follows. In the phosphorylated form it could act as an anti-anti-sigma factor that counteracts an anti-sigma factor and thus releases a sigma factor from inhibition. The protein is Putative anti-sigma factor antagonist TM_1081 of Thermotoga maritima (strain ATCC 43589 / DSM 3109 / JCM 10099 / NBRC 100826 / MSB8).